The primary structure comprises 664 residues: Alcohol oxidase (664 aa).

8–39 (DIIVVGGGSTGCCIAGRLANLDDQNLTVALIE) is a binding site for FAD. Residue histidine 568 is the Proton acceptor of the active site. A Microbody targeting signal motif is present at residues 662 to 664 (ARF).

It belongs to the GMC oxidoreductase family. As to quaternary structure, homooctamer. It depends on FAD as a cofactor.

The protein localises to the peroxisome matrix. The enzyme catalyses a primary alcohol + O2 = an aldehyde + H2O2. It participates in energy metabolism; methane degradation. Catalyzes the oxidation of methanol to formaldehyde and hydrogen peroxide, the first step in the methanol utilization pathway of methylotrophic yeasts. The chain is Alcohol oxidase (MOX) from Pichia angusta (Yeast).